The following is a 263-amino-acid chain: Small ribosomal subunit protein eS4, Y isoform 2 (263 aa).

Residues 42 to 104 enclose the S4 RNA-binding domain; it reads LPLIVFLRNR…TGEHFRLVYN (63 aa).

It belongs to the eukaryotic ribosomal protein eS4 family.

In Homo sapiens (Human), this protein is Small ribosomal subunit protein eS4, Y isoform 2 (RPS4Y2).